A 933-amino-acid polypeptide reads, in one-letter code: MLQSKVFNKKTRGGRIQKQVREVYLRDDIYCGAFSCKSCDSSAARLSSSKIIVVDTNVVLHQIDLLENKAIDTVVVLSVVLDEVKNRNRSVYNRIRLLCSNPARQFYVFSNHVHKDTYVQAMEKESANDHNDRAIRVATLWYQKHLGDTSQVLLVTNDRENKRKATEEGISAETIEAYVKSLGQPELLDLLAQPTNEDITMEDADDSRPSKRKLIYQEHKPMSEITAGLHRGIYHQGKLRVNRFNPYEAYVGSESIGEEIIIYGRSNMNRAFDGDIVAVELLPRDQWQDEKALSIAEEDDEEDDTVHLAPDNVDDAPRTSNLSHETSGDKNAAPVRPSGRVVGVIRRNWHSYCGSLEPMSLPAGSGGTAHALFVSKDRRIPKIRINTRQLQNLLDMRIVVAVDSWDRQSRYPSGHYVRPIGKIGDKETETEVVLIENDVDYSPFSSQVLACLPPLPWSVSSEDVSNPVRQDLRHLLVFSVDPPGCKDIDDALHCTSLPNGNFELGVHIADVTNFVHPGTPLDDEASKRGTSVYLVERRIDMLPKPLTEDICSLRADVERLAFSVIWEMSPDAEIISTRFTKSIIKSSAALSYIEAQARMDDSRLTDSLTTDLRNMNTLAKIMRQRRIDRGALTLASAEVKFDIDPENHDPLNIGMYQILEANQMVEEFMLAANVSVAGQILKLFPSCSLLRRHPTPTREMLEPLLRTAAAIGLTLDVSSSKALADSLDRAVGEDPYFNKLIRILATRCMTQAVYFCSGDLSPPEYHHYGLAAPLYTHFTSPIRRYADVFVHRLLAASLGIYKLPTVFQDRPQLTSVADNLNYRHRNAQMAGRASVELYVLIYFRTRPTDEEARVVKIRSNGFIVFVPKYGIEGPVYLTGKGEKGAGDWYVDEEKQKIVKMDGSLSYSVLQTVKIHMEVVEPQPNRPKLQLTLL.

The region spanning 50–163 (KIIVVDTNVV…LVTNDRENKR (114 aa)) is the PINc domain. The CSD1 domain occupies 217–321 (QEHKPMSEIT…NVDDAPRTSN (105 aa)). Positions 296–336 (AEEDDEEDDTVHLAPDNVDDAPRTSNLSHETSGDKNAAPVR) are disordered. In terms of domain architecture, CSD2 spans 371–438 (ALFVSKDRRI…ETEVVLIEND (68 aa)). One can recognise an RNB domain in the interval 469 to 798 (RQDLRHLLVF…FVHRLLAASL (330 aa)). Asp481 and Asp490 together coordinate Mg(2+).

It belongs to the RNR ribonuclease family. As to quaternary structure, probable component of the RNA exosome complex. Requires Mg(2+) as cofactor.

The protein resides in the nucleus. Its function is as follows. Catalytic component of the RNA exosome complex which has 3'-&gt;5' exoribonuclease activity and participates in a multitude of cellular RNA processing and degradation events. Required for 5.8S rRNA intermediate processing and the degradation of 5' external transcribed spacer (5' ETS), a maturation by-product of rRNA synthesis. Is not involved in the degradation of turnip crinkle virus (TCV) RNA and significant virus resistance. Required for normal development of female gametophytes and early embryogenesis. The sequence is that of Exosome complex exonuclease RRP44 homolog A from Arabidopsis thaliana (Mouse-ear cress).